The chain runs to 158 residues: C-type lectin TsL (158 aa).

The first 23 residues, 1–23 (MGRFIFVSFGLLVVFLSLSGAKG), serve as a signal peptide directing secretion. The C-type lectin domain occupies 24–158 (SCCTNDSLPM…KNSFLCQCKF (135 aa)). 4 disulfides stabilise this stretch: C26/C37, C54/C154, C61/C156, and C129/C146. An N-linked (GlcNAc...) (high mannose) asparagine glycan is attached at N28. 5 residues coordinate Ca(2+): Q119, D121, E127, N142, and D143. The Galactose-binding motif lies at 119-121 (QPD).

It belongs to the true venom lectin family. Homodimer; disulfide-linked. Expressed by the venom gland.

The protein localises to the secreted. Functionally, galactose-binding protein which recognizes specific carbohydrate structures and agglutinates a variety of animal cells by binding to cell-surface glycoproteins and glycolipids. May be a calcium-dependent lectin. In Trimeresurus stejnegeri (Chinese green tree viper), this protein is C-type lectin TsL.